Reading from the N-terminus, the 494-residue chain is Aspartyl/glutamyl-tRNA(Asn/Gln) amidotransferase subunit B (494 aa).

It belongs to the GatB/GatE family. GatB subfamily. In terms of assembly, heterotrimer of A, B and C subunits.

It catalyses the reaction L-glutamyl-tRNA(Gln) + L-glutamine + ATP + H2O = L-glutaminyl-tRNA(Gln) + L-glutamate + ADP + phosphate + H(+). The enzyme catalyses L-aspartyl-tRNA(Asn) + L-glutamine + ATP + H2O = L-asparaginyl-tRNA(Asn) + L-glutamate + ADP + phosphate + 2 H(+). Allows the formation of correctly charged Asn-tRNA(Asn) or Gln-tRNA(Gln) through the transamidation of misacylated Asp-tRNA(Asn) or Glu-tRNA(Gln) in organisms which lack either or both of asparaginyl-tRNA or glutaminyl-tRNA synthetases. The reaction takes place in the presence of glutamine and ATP through an activated phospho-Asp-tRNA(Asn) or phospho-Glu-tRNA(Gln). This is Aspartyl/glutamyl-tRNA(Asn/Gln) amidotransferase subunit B from Nitrobacter winogradskyi (strain ATCC 25391 / DSM 10237 / CIP 104748 / NCIMB 11846 / Nb-255).